Reading from the N-terminus, the 205-residue chain is MTKIVRSKYKASRRLGVSLWGDGKDAFNTRNYRPGQHGRNTMVKTSDYGLHLKAKQRIKCHYGRITEKQFRNIFGFAQKMKGNTGENFIGLLESRLDSIVYRMNIAPTIFSSRQLISHGHIKVNGKKADIASMRLKEGDVIEIKEASRQMGIIQESVSKQGQTTPDYVSFDVDSLSGKYLRVPTISDVRYPFTPEVHLVVELYSR.

Positions 94-172 (SRLDSIVYRM…TTPDYVSFDV (79 aa)) constitute an S4 RNA-binding domain.

This sequence belongs to the universal ribosomal protein uS4 family. Part of the 30S ribosomal subunit. Contacts protein S5. The interaction surface between S4 and S5 is involved in control of translational fidelity.

Functionally, one of the primary rRNA binding proteins, it binds directly to 16S rRNA where it nucleates assembly of the body of the 30S subunit. Its function is as follows. With S5 and S12 plays an important role in translational accuracy. The protein is Small ribosomal subunit protein uS4 of Rickettsia bellii (strain OSU 85-389).